Consider the following 338-residue polypeptide: Aspartate-semialdehyde dehydrogenase (338 aa).

NADP(+)-binding positions include threonine 13–valine 16 and asparagine 41–serine 42. Position 101 (arginine 101) interacts with phosphate. Cysteine 132 serves as the catalytic Acyl-thioester intermediate. Substrate is bound at residue glutamine 159. NADP(+) is bound at residue serine 162–glycine 163. Lysine 216 provides a ligand contact to phosphate. Arginine 237 is a binding site for substrate. The active-site Proton acceptor is the histidine 244. Asparagine 317 contacts NADP(+).

The protein belongs to the aspartate-semialdehyde dehydrogenase family. Homodimer.

It catalyses the reaction L-aspartate 4-semialdehyde + phosphate + NADP(+) = 4-phospho-L-aspartate + NADPH + H(+). It functions in the pathway amino-acid biosynthesis; L-lysine biosynthesis via DAP pathway; (S)-tetrahydrodipicolinate from L-aspartate: step 2/4. It participates in amino-acid biosynthesis; L-methionine biosynthesis via de novo pathway; L-homoserine from L-aspartate: step 2/3. The protein operates within amino-acid biosynthesis; L-threonine biosynthesis; L-threonine from L-aspartate: step 2/5. In terms of biological role, catalyzes the NADPH-dependent formation of L-aspartate-semialdehyde (L-ASA) by the reductive dephosphorylation of L-aspartyl-4-phosphate. The chain is Aspartate-semialdehyde dehydrogenase from Rickettsia bellii (strain RML369-C).